We begin with the raw amino-acid sequence, 1573 residues long: Pentafunctional AROM polypeptide (1573 aa).

A 3-dehydroquinate synthase region spans residues 1–384; it reads MSNESNIITV…YEKHATVVSD (384 aa). Residues 46–48, 83–86, 114–116, and Asp-119 each bind NAD(+); these read DSN, ESSK, and GGV. Arg-130 contributes to the 7-phospho-2-dehydro-3-deoxy-D-arabino-heptonate binding site. Position 139 to 140 (139 to 140) interacts with NAD(+); that stretch reads TT. 2 residues coordinate 7-phospho-2-dehydro-3-deoxy-D-arabino-heptonate: Asp-146 and Lys-152. Residue Lys-161 participates in NAD(+) binding. Residue Asn-162 coordinates 7-phospho-2-dehydro-3-deoxy-D-arabino-heptonate. Residues 179 to 182 and Asn-190 each bind NAD(+); that span reads FLHT. A Zn(2+)-binding site is contributed by Glu-194. 7-phospho-2-dehydro-3-deoxy-D-arabino-heptonate is bound by residues 194–197 and Lys-250; that span reads EIIK. Catalysis depends on Glu-260, which acts as the Proton acceptor; for 3-dehydroquinate synthase activity. 7-phospho-2-dehydro-3-deoxy-D-arabino-heptonate-binding positions include 264–268 and His-271; that span reads RNLLN. A Zn(2+)-binding site is contributed by His-271. His-275 serves as the catalytic Proton acceptor; for 3-dehydroquinate synthase activity. 7-phospho-2-dehydro-3-deoxy-D-arabino-heptonate-binding residues include His-287 and Lys-356. His-287 contributes to the Zn(2+) binding site. An EPSP synthase region spans residues 397 to 843; it reads VDEFTKSSWD…WDVLHQSFGV (447 aa). The active-site For EPSP synthase activity is the Cys-825. The shikimate kinase stretch occupies residues 863-1058; the sequence is NASIILIGMR…KTKKRSTFLT (196 aa). 870 to 877 is a binding site for ATP; sequence GMRGAGKT. The 3-dehydroquinase stretch occupies residues 1059–1280; that stretch reads LNYPRIEDAL…AAPGQLTVKQ (222 aa). His-1182 serves as the catalytic Proton acceptor; for 3-dehydroquinate dehydratase activity. The active-site Schiff-base intermediate with substrate; for 3-dehydroquinate dehydratase activity is Lys-1211. Residues 1293-1573 are shikimate dehydrogenase; sequence PEKFFLFGKP…FDAVYQKVIE (281 aa).

In the N-terminal section; belongs to the sugar phosphate cyclases superfamily. Dehydroquinate synthase family. This sequence in the 2nd section; belongs to the EPSP synthase family. The protein in the 3rd section; belongs to the shikimate kinase family. It in the 4th section; belongs to the type-I 3-dehydroquinase family. In the C-terminal section; belongs to the shikimate dehydrogenase family. In terms of assembly, homodimer. Zn(2+) is required as a cofactor.

Its subcellular location is the cytoplasm. The catalysed reaction is 7-phospho-2-dehydro-3-deoxy-D-arabino-heptonate = 3-dehydroquinate + phosphate. The enzyme catalyses 3-dehydroquinate = 3-dehydroshikimate + H2O. It carries out the reaction shikimate + NADP(+) = 3-dehydroshikimate + NADPH + H(+). It catalyses the reaction shikimate + ATP = 3-phosphoshikimate + ADP + H(+). The catalysed reaction is 3-phosphoshikimate + phosphoenolpyruvate = 5-O-(1-carboxyvinyl)-3-phosphoshikimate + phosphate. It participates in metabolic intermediate biosynthesis; chorismate biosynthesis; chorismate from D-erythrose 4-phosphate and phosphoenolpyruvate: step 2/7. It functions in the pathway metabolic intermediate biosynthesis; chorismate biosynthesis; chorismate from D-erythrose 4-phosphate and phosphoenolpyruvate: step 3/7. The protein operates within metabolic intermediate biosynthesis; chorismate biosynthesis; chorismate from D-erythrose 4-phosphate and phosphoenolpyruvate: step 4/7. Its pathway is metabolic intermediate biosynthesis; chorismate biosynthesis; chorismate from D-erythrose 4-phosphate and phosphoenolpyruvate: step 5/7. It participates in metabolic intermediate biosynthesis; chorismate biosynthesis; chorismate from D-erythrose 4-phosphate and phosphoenolpyruvate: step 6/7. In terms of biological role, the AROM polypeptide catalyzes 5 consecutive enzymatic reactions in prechorismate polyaromatic amino acid biosynthesis. The chain is Pentafunctional AROM polypeptide from Schizosaccharomyces pombe (strain 972 / ATCC 24843) (Fission yeast).